Consider the following 498-residue polypeptide: ATP synthase subunit beta, chloroplastic (498 aa).

172–179 lines the ATP pocket; sequence GGAGVGKT.

This sequence belongs to the ATPase alpha/beta chains family. F-type ATPases have 2 components, CF(1) - the catalytic core - and CF(0) - the membrane proton channel. CF(1) has five subunits: alpha(3), beta(3), gamma(1), delta(1), epsilon(1). CF(0) has four main subunits: a(1), b(1), b'(1) and c(9-12).

The protein localises to the plastid. The protein resides in the chloroplast thylakoid membrane. It carries out the reaction ATP + H2O + 4 H(+)(in) = ADP + phosphate + 5 H(+)(out). Its function is as follows. Produces ATP from ADP in the presence of a proton gradient across the membrane. The catalytic sites are hosted primarily by the beta subunits. This Triticum aestivum (Wheat) protein is ATP synthase subunit beta, chloroplastic.